We begin with the raw amino-acid sequence, 520 residues long: Maturase K (520 aa).

The protein belongs to the intron maturase 2 family. MatK subfamily.

It localises to the plastid. It is found in the chloroplast. Its function is as follows. Usually encoded in the trnK tRNA gene intron. Probably assists in splicing its own and other chloroplast group II introns. The polypeptide is Maturase K (Galanthus elwesii (Giant snowdrop)).